Consider the following 61-residue polypeptide: Small ribosomal subunit protein uS14 (61 aa).

Zn(2+)-binding residues include Cys-24, Cys-27, Cys-40, and Cys-43.

Belongs to the universal ribosomal protein uS14 family. Zinc-binding uS14 subfamily. Part of the 30S ribosomal subunit. Contacts proteins S3 and S10. Zn(2+) serves as cofactor.

In terms of biological role, binds 16S rRNA, required for the assembly of 30S particles and may also be responsible for determining the conformation of the 16S rRNA at the A site. This is Small ribosomal subunit protein uS14 from Bifidobacterium adolescentis (strain ATCC 15703 / DSM 20083 / NCTC 11814 / E194a).